A 230-amino-acid chain; its full sequence is Orotidine 5'-phosphate decarboxylase (230 aa).

Residues D11, K34, 61–70, T117, R179, Q188, G208, and R209 contribute to the substrate site; that span reads DLKLHDIPNT. K63 serves as the catalytic Proton donor.

Belongs to the OMP decarboxylase family. Type 1 subfamily. As to quaternary structure, homodimer.

The enzyme catalyses orotidine 5'-phosphate + H(+) = UMP + CO2. It participates in pyrimidine metabolism; UMP biosynthesis via de novo pathway; UMP from orotate: step 2/2. Functionally, catalyzes the decarboxylation of orotidine 5'-monophosphate (OMP) to uridine 5'-monophosphate (UMP). The sequence is that of Orotidine 5'-phosphate decarboxylase from Streptococcus uberis (strain ATCC BAA-854 / 0140J).